The chain runs to 584 residues: Kinesin-like protein KIN-10C (584 aa).

Residues 11 to 324 (PVRVVLRVRP…VSLAARSRHV (314 aa)) enclose the Kinesin motor domain. Residue 99–106 (GATGSGKT) participates in ATP binding. 2 disordered regions span residues 377–398 (SMSHKKQSASGRVSGRGKAMDQ) and 445–469 (DKTGSSLRKALSPISSNMDPQKQRT).

Belongs to the TRAFAC class myosin-kinesin ATPase superfamily. Kinesin family. KIN-10 subfamily.

This Oryza sativa subsp. japonica (Rice) protein is Kinesin-like protein KIN-10C.